The sequence spans 64 residues: Large ribosomal subunit protein bL33 (64 aa).

Belongs to the bacterial ribosomal protein bL33 family.

This is Large ribosomal subunit protein bL33 from Thermosynechococcus vestitus (strain NIES-2133 / IAM M-273 / BP-1).